A 964-amino-acid chain; its full sequence is Translation initiation factor IF-2 (964 aa).

Over residues 105–119 the composition is skewed to low complexity; sequence AALAESEASEAAPVV. Disordered stretches follow at residues 105–133 and 146–378; these read AALAESEASEAAPVVDAEEVARREEEHRR and KARQ…PTEP. Basic and acidic residues-rich tracts occupy residues 123–133, 146–183, 197–253, and 266–278; these read EVARREEEHRR, KARQEAMEREEAERRARQEAAEAEQKRQAELAAKKAEE, EAPR…RAIR, and PAERKAEEVKKAE. The span at 288 to 302 shows a compositional bias: low complexity; sequence KPAGEARPAAAKKPA. Positions 303–313 are enriched in pro residues; the sequence is APAPAAAPAPG. One can recognise a tr-type G domain in the interval 464–633; it reads TRPPVVTVMG…LLQAEVLELK (170 aa). The segment at 473 to 480 is G1; sequence GHVDHGKT. 473-480 contacts GTP; the sequence is GHVDHGKT. Residues 498–502 form a G2 region; the sequence is GITQH. The interval 519–522 is G3; that stretch reads DTPG. GTP-binding positions include 519 to 523 and 573 to 576; these read DTPGH and TKVD. Residues 573–576 are G4; that stretch reads TKVD. The G5 stretch occupies residues 609–611; that stretch reads SAK.

It belongs to the TRAFAC class translation factor GTPase superfamily. Classic translation factor GTPase family. IF-2 subfamily.

Its subcellular location is the cytoplasm. One of the essential components for the initiation of protein synthesis. Protects formylmethionyl-tRNA from spontaneous hydrolysis and promotes its binding to the 30S ribosomal subunits. Also involved in the hydrolysis of GTP during the formation of the 70S ribosomal complex. This Ralstonia pickettii (strain 12J) protein is Translation initiation factor IF-2.